The chain runs to 398 residues: Cell division protein FtsZ (398 aa).

Residues 21–25 (GGGGN), 108–110 (GTG), Glu-139, Arg-143, and Asp-187 each bind GTP.

It belongs to the FtsZ family. Homodimer. Polymerizes to form a dynamic ring structure in a strictly GTP-dependent manner. Interacts directly with several other division proteins.

It localises to the cytoplasm. In terms of biological role, essential cell division protein that forms a contractile ring structure (Z ring) at the future cell division site. The regulation of the ring assembly controls the timing and the location of cell division. One of the functions of the FtsZ ring is to recruit other cell division proteins to the septum to produce a new cell wall between the dividing cells. Binds GTP and shows GTPase activity. The protein is Cell division protein FtsZ of Pseudomonas putida (strain ATCC 47054 / DSM 6125 / CFBP 8728 / NCIMB 11950 / KT2440).